The primary structure comprises 200 residues: Nucleoplasmin (200 aa).

Alanine 2 bears the N-acetylalanine mark. Serine 3 is subject to Phosphoserine. Threonine 4 bears the Phosphothreonine mark. Position 6 is a phosphoserine (serine 6). Residue threonine 8 is modified to Phosphothreonine. Positions 35–39 are acidic tract A1; it reads EDDEE. Over residues 123–148 the composition is skewed to acidic residues; that stretch reads DYSWAEEEDEGEAEGEEEEEEEEDQE. Positions 123-200 are disordered; sequence DYSWAEEEDE…GRGRKPAAKK (78 aa). Residues 128 to 148 are acidic tract A2; that stretch reads EEEDEGEAEGEEEEEEEEDQE. Serine 149 bears the Phosphoserine mark. The span at 153 to 170 shows a compositional bias: basic residues; it reads AVKRPAATKKAGQAKKKK. A Bipartite nuclear localization signal motif is present at residues 155-170; sequence KRPAATKKAGQAKKKK. An acidic tract A3 region spans residues 174–176; the sequence is EDE. Phosphoserine occurs at positions 177, 178, and 182. Positions 185–200 are enriched in basic residues; it reads KKGKGAGRGRKPAAKK. Arginine 192 bears the Omega-N-methylarginine; by PRMT5; alternate mark. The residue at position 192 (arginine 192) is a Symmetric dimethylarginine; by PRMT5; alternate.

This sequence belongs to the nucleoplasmin family. As to quaternary structure, homopentamer, when bound to H2A-H2B dimers only. Homodecamer of two stacked pentamers, when bound to H2A-H2B dimers and H3-H4 tetramers simultaneously. Interacts with the heterotetramer formed by wdr77 and prmt5. Activated by phosphorylation of multiple serine/threonine residues, along both core and tail domains. The level of phosphorylation gradually increases during egg maturation, reaching an average of 7-10 phosphates per monomer, so that at the time of fertilization the activity of the protein is maximum. Post-translationally, methylated by prmt5, yielding both monomethylated and symmetrically dimethylated Arg-192.

It localises to the nucleus. Acts as a chaperone for histones, such as histone H2A-H2B, and thus regulates the assembly of nucleosome cores. Involved in chromatin remodeling, especially during fertilization and early embryonic development. May be involved in sperm chromatin decondensation during fertilization. The polypeptide is Nucleoplasmin (Xenopus laevis (African clawed frog)).